Here is a 308-residue protein sequence, read N- to C-terminus: Porphobilinogen deaminase (308 aa).

Cys-241 carries the S-(dipyrrolylmethanemethyl)cysteine modification.

Belongs to the HMBS family. In terms of assembly, monomer. It depends on dipyrromethane as a cofactor.

It catalyses the reaction 4 porphobilinogen + H2O = hydroxymethylbilane + 4 NH4(+). Its pathway is porphyrin-containing compound metabolism; protoporphyrin-IX biosynthesis; coproporphyrinogen-III from 5-aminolevulinate: step 2/4. Its function is as follows. Tetrapolymerization of the monopyrrole PBG into the hydroxymethylbilane pre-uroporphyrinogen in several discrete steps. In Staphylococcus carnosus (strain TM300), this protein is Porphobilinogen deaminase.